An 86-amino-acid chain; its full sequence is Small ribosomal subunit protein bS16 (86 aa).

Belongs to the bacterial ribosomal protein bS16 family.

The polypeptide is Small ribosomal subunit protein bS16 (Xanthomonas campestris pv. campestris (strain 8004)).